Consider the following 139-residue polypeptide: Probable disulfide formation protein C 1 (139 aa).

A helical transmembrane segment spans residues 8 to 27; that stretch reads EYALFTAWGASFIATLGSLY. A disulfide bond links cysteine 37 and cysteine 40. 2 consecutive transmembrane segments (helical) span residues 42–61 and 68–85; these read YQRI…VVKK and YSLP…YHYA. Cysteine 99 and cysteine 104 are disulfide-bonded. Residues 113–135 form a helical membrane-spanning segment; that stretch reads GFVTIPFLALIGFITIAVCSFIV.

The protein belongs to the DsbB family. BdbC subfamily.

Its subcellular location is the cell membrane. Its function is as follows. Required for disulfide bond formation in some proteins. The sequence is that of Probable disulfide formation protein C 1 (bdbC1) from Bacillus cereus (strain ATCC 10987 / NRS 248).